We begin with the raw amino-acid sequence, 261 residues long: Zinc import ATP-binding protein ZnuC (261 aa).

The ABC transporter domain maps to 5 to 220; sequence ISLKALSVTF…PSYIALFGSA (216 aa). 37-44 lines the ATP pocket; that stretch reads GPNGAGKS. Positions 236 to 261 are disordered; sequence HHDLAGQPVSGDATQCNHHHHGHHHD. A compositionally biased stretch (basic residues) spans 252-261; the sequence is NHHHHGHHHD.

Belongs to the ABC transporter superfamily. Zinc importer (TC 3.A.1.15.5) family. As to quaternary structure, the complex is composed of two ATP-binding proteins (ZnuC), two transmembrane proteins (ZnuB) and a solute-binding protein (ZnuA).

Its subcellular location is the cell inner membrane. The enzyme catalyses Zn(2+)(out) + ATP(in) + H2O(in) = Zn(2+)(in) + ADP(in) + phosphate(in) + H(+)(in). Part of the ABC transporter complex ZnuABC involved in zinc import. Responsible for energy coupling to the transport system. The polypeptide is Zinc import ATP-binding protein ZnuC (Vibrio vulnificus (strain CMCP6)).